Consider the following 321-residue polypeptide: MENTIGTPTLWCSFGVFLIIIIIIEMSIQKIFVYKESAFKIALYSSCISMLTAILFDVLIWIYIKFTVNSYLANINFLTFISGYLLEQSLSMDNVAMWFFLFQLFSISMVHQRVILFYGTFLALVFRSSIIFFGVWLLSKWSFLFYVLSIILLFTGIITILSNGVNKKTDVQNTFIMSWIYKKFRITKNFSKNNFFTKENGVIVATPLFLVLILIELNDIIFSIDSIPAIFLITKDPFIIITSSFFSIIGLRSIYVILANSIQKFYIIKYGITLILIFISIKILLKEFVDIPIMLSSFFIVCILVACFIIEKFFFQVKSKN.

Transmembrane regions (helical) follow at residues 10–28 (LWCS…EMSI), 41–63 (IALY…IWIY), 94–111 (NVAM…SMVH), 116–138 (LFYG…VWLL), 143–165 (FLFY…SNGV), 200–222 (NGVI…DIIF), 237–259 (PFII…VILA), 266–283 (YIIK…SIKI), and 293–315 (IMLS…KFFF).

The protein belongs to the TerC family.

The protein localises to the cell membrane. This is an uncharacterized protein from Buchnera aphidicola subsp. Baizongia pistaciae (strain Bp).